The primary structure comprises 387 residues: 1,3-propanediol dehydrogenase (387 aa).

The protein belongs to the iron-containing alcohol dehydrogenase family. As to quaternary structure, homooctamer. The cofactor is Fe cation.

It catalyses the reaction propane-1,3-diol + NAD(+) = 3-hydroxypropanal + NADH + H(+). The chain is 1,3-propanediol dehydrogenase (dhaT) from Klebsiella pneumoniae.